Reading from the N-terminus, the 330-residue chain is Clp protease adapter protein ClpF, chloroplastic (330 aa).

The transit peptide at 1–65 (MVQSQSLSTL…KSLKQRNLLR (65 aa)) directs the protein to the chloroplast. The NTD, required for CLPS1-binding stretch occupies residues 66–138 (VEARWPFQGG…VEEESIRLQE (73 aa)). Coiled-coil stretches lie at residues 112–139 (NLEQ…LQEG) and 175–195 (AAKL…VSAK). Residues 153–188 (GISIIRLRADLQNAIDSEDYGLAAKLRDEISKLEAE) enclose the UVR domain. The interval 203-310 (EYAFRLGQKL…TAGDFIPVKQ (108 aa)) is yccV-like.

Binds to CLPC1 and CLPC2. Interacts with ClpS1; this interaction stimulates their association with ClpC. Associates with the Clp substrate HEMA1 (GluTR). Expressed constitutively in photosynthetic tissues such as leaves, stems and flowers, and, at low levels, in siliques.

Its subcellular location is the plastid. The protein localises to the chloroplast. In terms of biological role, clp protease adapter that facilitates CLPS1 recruitment to ClpC chaperones thus forming a binary adapter for selective substrate recognition and delivery to plastid Clp protease system (CLPC). The polypeptide is Clp protease adapter protein ClpF, chloroplastic (Arabidopsis thaliana (Mouse-ear cress)).